A 24-amino-acid chain; its full sequence is Coenzyme PQQ synthesis protein A (24 aa).

The segment at residues 16-20 (EITMY) is a cross-link (pyrroloquinoline quinone (Glu-Tyr)).

This sequence belongs to the PqqA family.

The protein operates within cofactor biosynthesis; pyrroloquinoline quinone biosynthesis. Its function is as follows. Required for coenzyme pyrroloquinoline quinone (PQQ) biosynthesis. PQQ is probably formed by cross-linking a specific glutamate to a specific tyrosine residue and excising these residues from the peptide. The protein is Coenzyme PQQ synthesis protein A of Burkholderia cenocepacia (strain ATCC BAA-245 / DSM 16553 / LMG 16656 / NCTC 13227 / J2315 / CF5610) (Burkholderia cepacia (strain J2315)).